Here is a 443-residue protein sequence, read N- to C-terminus: 5-methylthioadenosine/S-adenosylhomocysteine deaminase 1 (443 aa).

Residues H69 and H71 each contribute to the Zn(2+) site. Substrate is bound by residues E98 and H191. H218 is a binding site for Zn(2+). The substrate site is built by E221 and D306. Residue D306 coordinates Zn(2+).

The protein belongs to the metallo-dependent hydrolases superfamily. MTA/SAH deaminase family. Zn(2+) is required as a cofactor.

The enzyme catalyses S-adenosyl-L-homocysteine + H2O + H(+) = S-inosyl-L-homocysteine + NH4(+). It catalyses the reaction S-methyl-5'-thioadenosine + H2O + H(+) = S-methyl-5'-thioinosine + NH4(+). In terms of biological role, catalyzes the deamination of 5-methylthioadenosine and S-adenosyl-L-homocysteine into 5-methylthioinosine and S-inosyl-L-homocysteine, respectively. Is also able to deaminate adenosine. The chain is 5-methylthioadenosine/S-adenosylhomocysteine deaminase 1 from Syntrophus aciditrophicus (strain SB).